We begin with the raw amino-acid sequence, 255 residues long: uncharacterized protein (255 aa).

The span at 1–10 shows a compositional bias: basic residues; the sequence is MSDSIHRRKV. Residues 1 to 78 are disordered; the sequence is MSDSIHRRKV…SPMRGLPMEE (78 aa). Residues 44–61 are compositionally biased toward basic and acidic residues; the sequence is VFERSFSEPSLNRHRDGQ.

This is an uncharacterized protein from Arabidopsis thaliana (Mouse-ear cress).